The primary structure comprises 277 residues: Protein HEAT-INDUCED TAS1 TARGET 1 (277 aa).

The protein belongs to the heat induced plant HTT protein family. Interacts with the heat shock proteins HSP70-14 and At2g33735/HSP40, and with NFYC2 in both cytoplasm and nucleus. As to expression, expressed ubiquitously, including in seedlings, leaves, stems, inflorescences and siliques.

Its subcellular location is the cytoplasm. The protein localises to the nucleus. Its function is as follows. Mediates both basal and acquired thermotolerance via HSFA1s-directed pathways (e.g. HSFA1A, HSFA1B, and HSFA1D). Triggers the expression of HSFA1A and HSFA1B. The sequence is that of Protein HEAT-INDUCED TAS1 TARGET 1 from Arabidopsis thaliana (Mouse-ear cress).